The primary structure comprises 529 residues: Cytochrome P450 monooxygenase oblE (529 aa).

The helical transmembrane segment at 38–58 (WQYIVTLLIAIITYDQVMYIW) threads the bilayer. Residue C477 participates in heme binding.

Belongs to the cytochrome P450 family. Requires heme as cofactor.

The protein localises to the membrane. It functions in the pathway secondary metabolite biosynthesis; terpenoid biosynthesis. Its function is as follows. Cytochrome P450 monooxygenase; part of the gene cluster that mediates the biosynthesis of the sesterterpenes ophiobolins, fungal phytotoxins with potential anti-cancer activities. The first step of the pathway is performed by the sesterterpene synthase oblA that possesses both prenyl transferase and terpene cyclase activity, converting isopentenyl diphosphate and dimethylallyl diphosphate into geranylfarnesyl diphosphate (GFPP) and further converting GFPP into ophiobolin F, respectively. Other sesterterpenoids (C(25) terpenoids) are found as minor products of oblA. The cytochrome P450 monooxygenase oblB then catalyzes a four-step oxidative transformation of ophiobolin F to yield ophiobolin C. The function of the cytochrome P450 monooxygenase oblE has still to be determined. The chain is Cytochrome P450 monooxygenase oblE from Emericella variicolor (Aspergillus stellatus).